The primary structure comprises 302 residues: tRNA dimethylallyltransferase (302 aa).

10-17 (GPTATGKS) provides a ligand contact to ATP. Substrate is bound at residue 12–17 (TATGKS). The tract at residues 35–38 (DSRQ) is interaction with substrate tRNA.

Belongs to the IPP transferase family. In terms of assembly, monomer. Mg(2+) serves as cofactor.

It carries out the reaction adenosine(37) in tRNA + dimethylallyl diphosphate = N(6)-dimethylallyladenosine(37) in tRNA + diphosphate. Its function is as follows. Catalyzes the transfer of a dimethylallyl group onto the adenine at position 37 in tRNAs that read codons beginning with uridine, leading to the formation of N6-(dimethylallyl)adenosine (i(6)A). This Acaryochloris marina (strain MBIC 11017) protein is tRNA dimethylallyltransferase.